The following is a 199-amino-acid chain: Fe/S biogenesis protein NfuA (199 aa).

The [4Fe-4S] cluster site is built by C151 and C154.

Belongs to the NfuA family. As to quaternary structure, homodimer. The cofactor is [4Fe-4S] cluster.

Functionally, involved in iron-sulfur cluster biogenesis. Binds a 4Fe-4S cluster, can transfer this cluster to apoproteins, and thereby intervenes in the maturation of Fe/S proteins. Could also act as a scaffold/chaperone for damaged Fe/S proteins. This Stenotrophomonas maltophilia (strain R551-3) protein is Fe/S biogenesis protein NfuA.